Reading from the N-terminus, the 110-residue chain is Insulin (110 aa).

Positions 1-23 (MALWLQAFTLLVLLVLSSPGAQS) are cleaved as a signal peptide. Intrachain disulfides connect cysteine 30-cysteine 96, cysteine 42-cysteine 109, and cysteine 95-cysteine 100. The propeptide at 56–87 (DVDPLLGFLSPKSAQENEADEYPYKDQGDLKV) is c peptide.

The protein belongs to the insulin family. In terms of assembly, heterodimer of a B chain and an A chain linked by two disulfide bonds.

The protein resides in the secreted. Insulin decreases blood glucose concentration. It increases cell permeability to monosaccharides, amino acids and fatty acids. It accelerates glycolysis, the pentose phosphate cycle, and glycogen synthesis in liver. This is Insulin (ins) from Pantodon buchholzi (Freshwater butterflyfish).